A 326-amino-acid chain; its full sequence is Probable cell division protein WhiA (326 aa).

Residues 275–308 (SLEELGALADPPLTKDAIAGRIRRLLALADKRAR) constitute a DNA-binding region (H-T-H motif).

It belongs to the WhiA family.

Involved in cell division and chromosome segregation. The polypeptide is Probable cell division protein WhiA (Salinispora arenicola (strain CNS-205)).